Reading from the N-terminus, the 204-residue chain is Guanylate kinase (204 aa).

Residues 18-196 (PKLFTISAPA…SYEILKSIFI (179 aa)) enclose the Guanylate kinase-like domain. Residue 25 to 32 (APAGAGKT) participates in ATP binding.

The protein belongs to the guanylate kinase family.

Its subcellular location is the cytoplasm. The catalysed reaction is GMP + ATP = GDP + ADP. Functionally, essential for recycling GMP and indirectly, cGMP. The polypeptide is Guanylate kinase (Chlamydia felis (strain Fe/C-56) (Chlamydophila felis)).